A 413-amino-acid chain; its full sequence is Serine hydroxymethyltransferase (413 aa).

Residues L117 and 121–123 each bind (6S)-5,6,7,8-tetrahydrofolate; that span reads GHL. K226 bears the N6-(pyridoxal phosphate)lysine mark. A (6S)-5,6,7,8-tetrahydrofolate-binding site is contributed by 349–351; that stretch reads SPF.

This sequence belongs to the SHMT family. In terms of assembly, homodimer. Requires pyridoxal 5'-phosphate as cofactor.

Its subcellular location is the cytoplasm. It carries out the reaction (6R)-5,10-methylene-5,6,7,8-tetrahydrofolate + glycine + H2O = (6S)-5,6,7,8-tetrahydrofolate + L-serine. It functions in the pathway one-carbon metabolism; tetrahydrofolate interconversion. It participates in amino-acid biosynthesis; glycine biosynthesis; glycine from L-serine: step 1/1. Its function is as follows. Catalyzes the reversible interconversion of serine and glycine with tetrahydrofolate (THF) serving as the one-carbon carrier. This reaction serves as the major source of one-carbon groups required for the biosynthesis of purines, thymidylate, methionine, and other important biomolecules. Also exhibits THF-independent aldolase activity toward beta-hydroxyamino acids, producing glycine and aldehydes, via a retro-aldol mechanism. The chain is Serine hydroxymethyltransferase from Pelobacter propionicus (strain DSM 2379 / NBRC 103807 / OttBd1).